The following is a 500-amino-acid chain: MTIFDNYEVWFVIGSQHLYGPETLRQVTQHAEHVVNALNTEAKLPCKLVLKPLGTTPDEITAICRDANYDDRCAGLVVWLHTFSPAKMWINGLTMLNKPLLQFHTQFNAALPWDSIDMDFMNLNQTAHGGREFGFIGARMRQQHAVVTGHWQDKQAHERIGSWMRQAVSKQDTRHLKVCRFGDNMREVAVTDGDKVAAQIKFGFSVNTWAVGDLVQVVNSISDGDVNALVDEYESCYTMTPATQIHGKKRQNVLEAARIELGMKRFLEQGGFHAFTTTFEDLHGLKQLPGLAVQRLMQQGYGFAGEGDWKTAALLRIMKVMSTGLQGGTSFMEDYTYHFEKGNDLVLGSHMLEVCPSIAAEEKPILDVQHLGIGGKDDPARLIFNTQTGPAIVASLIDLGDRYRLLVNCIDTVKTPHSLPKLPVANALWKAQPDLPTASEAWILAGGAHHTVFSHALNLNDMRQFAEMHDIEITVIDNDTRLPAFKDALRWNEVYYGFRR.

Mn(2+) contacts are provided by glutamate 306, glutamate 333, histidine 350, and histidine 450.

This sequence belongs to the arabinose isomerase family. In terms of assembly, homohexamer. Mn(2+) serves as cofactor.

The enzyme catalyses beta-L-arabinopyranose = L-ribulose. It functions in the pathway carbohydrate degradation; L-arabinose degradation via L-ribulose; D-xylulose 5-phosphate from L-arabinose (bacterial route): step 1/3. Functionally, catalyzes the conversion of L-arabinose to L-ribulose. The sequence is that of L-arabinose isomerase (araA) from Escherichia coli (strain K12).